Consider the following 310-residue polypeptide: Methionyl-tRNA formyltransferase (310 aa).

Residue 111–114 (SLLP) participates in (6S)-5,6,7,8-tetrahydrofolate binding.

The protein belongs to the Fmt family.

The enzyme catalyses L-methionyl-tRNA(fMet) + (6R)-10-formyltetrahydrofolate = N-formyl-L-methionyl-tRNA(fMet) + (6S)-5,6,7,8-tetrahydrofolate + H(+). Its function is as follows. Attaches a formyl group to the free amino group of methionyl-tRNA(fMet). The formyl group appears to play a dual role in the initiator identity of N-formylmethionyl-tRNA by promoting its recognition by IF2 and preventing the misappropriation of this tRNA by the elongation apparatus. This chain is Methionyl-tRNA formyltransferase, found in Rhodopseudomonas palustris (strain TIE-1).